The sequence spans 116 residues: Cysteine proteinase inhibitor 1 (116 aa).

The N-terminal stretch at 1–26 is a signal peptide; that stretch reads MVPKPLSLLLFLLLALSAAVVGGRKL. A Cystatin domain is found at 30–89; that stretch reads GGWRPIESLNSAEVQDVAQFAVSEHNKQANDELQYQSVVRGYTQVVAGTNYRLVIAAKDG. Residues 73 to 77 carry the Secondary area of contact motif; it reads QVVAG. A glycan (N-linked (GlcNAc...) asparagine) is linked at N109.

Belongs to the cystatin family. Phytocystatin subfamily. Glycosylated.

It localises to the secreted. Functionally, specific inhibitor of papain family cysteine proteinases. Inhibits papain, chymopapain, bromelain, ficin, human cathepsins B, H and L, actinidain and house dustmite endopeptidase 1, but does not inhibit human bleomycin hydrolase. Inhibits papain with an IC(50) of 2.47 nM. Does not inhibit cysteine proteinases belonging to other families including clostripain, streptopain and calpain. This is Cysteine proteinase inhibitor 1 from Actinidia deliciosa (Kiwi).